The sequence spans 639 residues: Exocyst complex component EXO70E2 (639 aa).

It belongs to the EXO70 family. As to quaternary structure, component of the exocyst complex and of the exocyst-positive organelle (EXPO). Interacts with SEC6, SEC10A and SEC10B. As to expression, expressed in roots, in the root-hair zone, both in root hair and nonhair cells.

The protein localises to the secreted. Its subcellular location is the extracellular exosome. It is found in the cell membrane. It localises to the cytoplasm. The protein resides in the endomembrane system. In terms of biological role, influences the subcellular localization patterns of other exocyst complex proteins (e.g. SEC5A, SEC15A, SEC15B and EXO84B) leading to their recruitment to exocyst, well-defined large punctate structures throughout the cytosol. Essential component for the formation and the recruitment of exocyst subunits to the exocyst-positive organelle (EXPO), a secreted double membrane structure also called extracellular exosome, that acts as a sequester for cytosolic proteins to release them into the apoplast. The chain is Exocyst complex component EXO70E2 from Arabidopsis thaliana (Mouse-ear cress).